The sequence spans 192 residues: Probable apo-citrate lyase phosphoribosyl-dephospho-CoA transferase (192 aa).

It belongs to the CitX family.

It carries out the reaction apo-[citrate lyase ACP] + 2'-(5''-triphospho-alpha-D-ribosyl)-3'-dephospho-CoA = holo-[citrate lyase ACP] + diphosphate. Functionally, transfers 2-(5''-triphosphoribosyl)-3'-dephosphocoenzyme-A on a serine residue to the apo-acyl carrier protein (gamma chain) of the citrate lyase to yield holo-acyl carrier protein. The sequence is that of Probable apo-citrate lyase phosphoribosyl-dephospho-CoA transferase from Streptococcus pyogenes serotype M18 (strain MGAS8232).